The sequence spans 1159 residues: Anillin-like protein 1 (1159 aa).

Disordered regions lie at residues 43 to 81 (VASPTKVFGSSSKCNDGPSTPVHFHPQEPKETTPNMKEN), 266 to 327 (QQVS…TKTT), 409 to 430 (KLKKSSSANVTAPPAPTSAPVP), 549 to 608 (AIPK…GDVI), and 629 to 699 (FGFM…KSSS). The segment covering 50–60 (FGSSSKCNDGP) has biased composition (polar residues). The span at 287-327 (ASSATSSSSSTTTLTTISGASGSTTSGISNAPQDSASTKTT) shows a compositional bias: low complexity. Positions 421–430 (PPAPTSAPVP) are enriched in pro residues. The span at 564-584 (SASSLYSQGARSNTASPASKS) shows a compositional bias: polar residues. The segment covering 660–684 (VIEEETENEDESEPYEPEEEEDDDA) has biased composition (acidic residues). The region spanning 1029-1147 (DITYHGFLSM…WLSLINSTSK (119 aa)) is the PH domain.

Strongly expressed in dividing neuroblasts under the ventral epidermal cells during ventral enclosure.

Its subcellular location is the cytoplasm. The protein localises to the cell cortex. It localises to the cytoskeleton. The protein resides in the spindle. It is found in the midbody. Its subcellular location is the cleavage furrow. Required for contractile events in embryos that occur prior to mitosis, such as cortical ruffling and pseudocleavage. Promotes membrane ruffling by organizing cortical patches of septins and myosin II. Not generally required for cytokinesis in mitotic cells. Required for the asymmetric cleavage events that extrude the two polar bodies during oocyte meiosis. Not required for meiotic contractile ring assembly, initiation or closure but is required for the transformation of the contractile ring from a disk above the spindle to a tube around the spindle midzone. Promotes astral microtubule-directed cortical myosin polarization and cleavage furrow ingression. Regulates neuroblast cytokinesis during mid- to late-embryogenesis and is required for ventral enclosure. This chain is Anillin-like protein 1 (ani-1), found in Caenorhabditis elegans.